The sequence spans 164 residues: Oocyte-expressed protein homolog (164 aa).

Positions Pro44–Leu105 constitute a KH; atypical domain.

It belongs to the KHDC1 family. In terms of assembly, component of the subcortical maternal complex (SCMC), at least composed of NLRP5, KHDC3, OOEP, and TLE6. Within the complex, interacts with NLRP5, KHDC3 and TLE6. The SCMC may facilitate translocation of its components between the nuclear and cytoplasmic compartments. As part of the SCMC interacts with the SCMC-associated protein NLRP4F. Forms a scaffold complex with KHDC3/FILIA, and interacts with BLM and TRIM25 at DNA replication forks. As to expression, expressed in ovaries, where it is restricted to growing oocytes, with greatest levels in fully grown oocytes.

The protein localises to the cytoplasm. The protein resides in the nucleus. Its function is as follows. Component of the subcortical maternal complex (SCMC), a multiprotein complex that plays a key role in early embryonic development. The SCMC complex is a structural constituent of cytoplasmic lattices, which consist in fibrous structures found in the cytoplasm of oocytes and preimplantation embryos. They are required to store maternal proteins critical for embryonic development, such as proteins that control epigenetic reprogramming of the preimplantation embryo, and prevent their degradation or activation. As part of the OOEP-KHDC3 scaffold, recruits BLM and TRIM25 to DNA replication forks, thereby promoting the ubiquitination of BLM by TRIM25, enhancing BLM retainment at replication forks and therefore promoting stalled replication fork restart. Positively regulates the homologous recombination-mediated DNA double-strand break (DSB) repair pathway by regulating ATM activation and RAD51 recruitment to DSBs in oocytes. Thereby contributes to oocyte survival and the resumption and completion of meiosis. In Mus musculus (Mouse), this protein is Oocyte-expressed protein homolog.